We begin with the raw amino-acid sequence, 375 residues long: 4,4'-diaponeurosporenoate glycosyltransferase (375 aa).

Helical transmembrane passes span 3–23 (WLSRILTVIVAMSMACGALIF), 164–184 (FYEGFSAIFNLMTVVGMNVFS), 277–297 (IMAAIVLWLFGSIASILGLCL), and 330–350 (FSNLLMVCHPLLFMFFTKIFI).

The protein belongs to the glycosyltransferase 2 family. CrtQ subfamily.

Its subcellular location is the cell membrane. It functions in the pathway carotenoid biosynthesis; staphyloxanthin biosynthesis; staphyloxanthin from farnesyl diphosphate: step 4/5. In terms of biological role, catalyzes the glycosylation of 4,4'-diaponeurosporenoate, i.e. the esterification of glucose at the C1'' position with the carboxyl group of 4,4'-diaponeurosporenic acid, to form glycosyl-4,4'-diaponeurosporenoate. This is a step in the biosynthesis of staphyloxanthin, an orange pigment present in most staphylococci strains. This Staphylococcus aureus (strain bovine RF122 / ET3-1) protein is 4,4'-diaponeurosporenoate glycosyltransferase (crtQ).